A 193-amino-acid chain; its full sequence is ATP synthase subunit b (193 aa).

Residues 24–44 traverse the membrane as a helical segment; it reads PLAELIVGLLAFGLLVGFFFW.

Belongs to the ATPase B chain family. In terms of assembly, F-type ATPases have 2 components, F(1) - the catalytic core - and F(0) - the membrane proton channel. F(1) has five subunits: alpha(3), beta(3), gamma(1), delta(1), epsilon(1). F(0) has three main subunits: a(1), b(2) and c(10-14). The alpha and beta chains form an alternating ring which encloses part of the gamma chain. F(1) is attached to F(0) by a central stalk formed by the gamma and epsilon chains, while a peripheral stalk is formed by the delta and b chains.

It is found in the cell membrane. F(1)F(0) ATP synthase produces ATP from ADP in the presence of a proton or sodium gradient. F-type ATPases consist of two structural domains, F(1) containing the extramembraneous catalytic core and F(0) containing the membrane proton channel, linked together by a central stalk and a peripheral stalk. During catalysis, ATP synthesis in the catalytic domain of F(1) is coupled via a rotary mechanism of the central stalk subunits to proton translocation. In terms of biological role, component of the F(0) channel, it forms part of the peripheral stalk, linking F(1) to F(0). This chain is ATP synthase subunit b, found in Parafrankia sp. (strain EAN1pec).